Consider the following 500-residue polypeptide: Lysine--tRNA ligase (500 aa).

E411 and E418 together coordinate Mg(2+).

This sequence belongs to the class-II aminoacyl-tRNA synthetase family. As to quaternary structure, homodimer. Mg(2+) is required as a cofactor.

It localises to the cytoplasm. It catalyses the reaction tRNA(Lys) + L-lysine + ATP = L-lysyl-tRNA(Lys) + AMP + diphosphate. The protein is Lysine--tRNA ligase of Actinobacillus pleuropneumoniae serotype 7 (strain AP76).